A 294-amino-acid polypeptide reads, in one-letter code: Nucleotide-binding protein CLD_1131 (294 aa).

8 to 15 (GLSGAGKT) contacts ATP. 59 to 62 (DIRG) is a GTP binding site.

This sequence belongs to the RapZ-like family.

Its function is as follows. Displays ATPase and GTPase activities. The protein is Nucleotide-binding protein CLD_1131 of Clostridium botulinum (strain Okra / Type B1).